Here is a 219-residue protein sequence, read N- to C-terminus: Probable transaldolase (219 aa).

K83 acts as the Schiff-base intermediate with substrate in catalysis.

The protein belongs to the transaldolase family. Type 3B subfamily.

The protein resides in the cytoplasm. The catalysed reaction is D-sedoheptulose 7-phosphate + D-glyceraldehyde 3-phosphate = D-erythrose 4-phosphate + beta-D-fructose 6-phosphate. It participates in carbohydrate degradation; pentose phosphate pathway; D-glyceraldehyde 3-phosphate and beta-D-fructose 6-phosphate from D-ribose 5-phosphate and D-xylulose 5-phosphate (non-oxidative stage): step 2/3. Transaldolase is important for the balance of metabolites in the pentose-phosphate pathway. This Cereibacter sphaeroides (strain ATCC 17029 / ATH 2.4.9) (Rhodobacter sphaeroides) protein is Probable transaldolase.